We begin with the raw amino-acid sequence, 338 residues long: Phenylalanine--tRNA ligase alpha subunit (338 aa).

E252 is a Mg(2+) binding site.

It belongs to the class-II aminoacyl-tRNA synthetase family. Phe-tRNA synthetase alpha subunit type 1 subfamily. As to quaternary structure, tetramer of two alpha and two beta subunits. Mg(2+) is required as a cofactor.

Its subcellular location is the cytoplasm. It catalyses the reaction tRNA(Phe) + L-phenylalanine + ATP = L-phenylalanyl-tRNA(Phe) + AMP + diphosphate + H(+). This is Phenylalanine--tRNA ligase alpha subunit from Pseudomonas entomophila (strain L48).